The sequence spans 318 residues: DNA repair nuclease/redox regulator APEX1 (318 aa).

The interval M1–S59 is disordered. Residues P2 to N33 are necessary for interaction with YBX1, binding to RNA, association together with NPM1 to rRNA, endoribonuclease activity on abasic RNA and localization in the nucleoli. N6-acetyllysine; by EP300 occurs at positions 6 and 7. Positions G8–D13 match the Nuclear localization signal (NLS) motif. Over residues E16–V38 the composition is skewed to basic and acidic residues. The necessary for interaction with NPM1 and for efficient rRNA binding stretch occupies residues A23–N33. Residues K27, K31, K32, and K35 each carry the N6-acetyllysine modification. The residue at position 54 (S54) is a Phosphoserine. A Nuclear export signal (NES) motif is present at residues I64–G80. C65 is modified (S-nitrosocysteine; alternate). C65 and C93 form a disulfide bridge. D70 is a binding site for Mg(2+). C93 bears the S-nitrosocysteine; alternate mark. E96 is a Mg(2+) binding site. The active site involves Y171. K197 is subject to N6-acetyllysine. D210 and N212 together coordinate Mg(2+). D210 (proton donor/acceptor) is an active-site residue. At T233 the chain carries Phosphothreonine; by CDK5. The interval Q289 to L318 is mitochondrial targeting sequence (MTS). Mg(2+) is bound at residue D308. An S-nitrosocysteine modification is found at C310.

Belongs to the DNA repair enzymes AP/ExoA family. As to quaternary structure, monomer. Homodimer; disulfide-linked. Component of the SET complex, composed of at least APEX1, SET, ANP32A, HMGB2, NME1 and TREX1. Associates with the dimer XRCC5/XRCC6 in a DNA-dependent manner. Interacts with SIRT1; the interaction is increased in the context of genotoxic stress. Interacts with HDAC1, HDAC2 and HDAC3; the interactions are not dependent on the APEX1 acetylation status. Interacts with XRCC1; the interaction is induced by SIRT1 and increased with the APEX1 acetylated form. Interacts with NPM1 (via N-terminal domain); the interaction is RNA-dependent and decreases in hydrogen peroxide-damaged cells. Interacts (via N-terminus) with YBX1 (via C-terminus); the interaction is increased in presence of APEX1 acetylated at Lys-6 and Lys-7. Interacts with HNRNPL; the interaction is DNA-dependent. Interacts (via N-terminus) with KPNA1 and KPNA2. Interacts with TXN; the interaction stimulates the FOS/JUN AP-1 complex DNA-binding activity in a redox-dependent manner. Interacts with GZMA, KRT8, MDM2, POLB, PRDX6, PRPF19, RPLP0, TOMM20 and WDR77. Binds to CDK5. Mg(2+) serves as cofactor. It depends on Mn(2+) as a cofactor. In terms of processing, phosphorylated. Phosphorylation by kinase PKC or casein kinase CK2 results in enhanced redox activity that stimulates binding of the FOS/JUN AP-1 complex to its cognate binding site. AP-endodeoxyribonuclease activity is not affected by CK2-mediated phosphorylation. Phosphorylation of Thr-233 by CDK5 in response to MPP(+)/MPTP (1-methyl-4-phenylpyridinium) reduces AP-endodeoxyribonuclease activity resulting in accumulation of DNA damage and contributing to neuronal death. Post-translationally, acetylated on Lys-6 and Lys-7. Acetylation is increased by the transcriptional coactivator EP300 acetyltransferase, genotoxic agents like H(2)O(2) and methyl methanesulfonate (MMS). Acetylation increases its binding affinity to the negative calcium response element (nCaRE) DNA promoter. The acetylated form induces a stronger binding of YBX1 to the Y-box sequence in the MDR1 promoter than the unacetylated form. Deacetylated on lysines. Lys-6 and Lys-7 are deacetylated by SIRT1. Cleaved at Lys-31 by granzyme A to create the mitochondrial form; leading in reduction of binding to DNA, AP endodeoxyribonuclease activity, redox activation of transcription factors and to enhanced cell death. Cleaved by granzyme K; leading to intracellular ROS accumulation and enhanced cell death after oxidative stress. In terms of processing, cys-69 and Cys-93 are nitrosylated in response to nitric oxide (NO) and lead to the exposure of the nuclear export signal (NES). Post-translationally, ubiquitinated by MDM2; leading to translocation to the cytoplasm and proteasomal degradation. In terms of tissue distribution, the mitochondrial form is expressed in liver (at protein level). Thymus.

Its subcellular location is the nucleus. It localises to the nucleolus. The protein resides in the nucleus speckle. It is found in the endoplasmic reticulum. The protein localises to the cytoplasm. Its subcellular location is the mitochondrion. The catalysed reaction is Exonucleolytic cleavage in the 3'- to 5'-direction to yield nucleoside 5'-phosphates.. NPM1 stimulates endodeoxyribonuclease activity on double-stranded DNA with AP sites, but inhibits endoribonuclease activity on single-stranded RNA containing AP sites. Functionally, multifunctional protein that plays a central role in the cellular response to oxidative stress. The two major activities of APEX1 are DNA repair and redox regulation of transcriptional factors. Functions as an apurinic/apyrimidinic (AP) endodeoxyribonuclease in the DNA base excision repair (BER) pathway of DNA lesions induced by oxidative and alkylating agents. Initiates repair of AP sites in DNA by catalyzing hydrolytic incision of the phosphodiester backbone immediately adjacent to the damage, generating a single-strand break with 5'-deoxyribose phosphate and 3'-hydroxyl ends. Also incises at AP sites in the DNA strand of DNA/RNA hybrids, single-stranded DNA regions of R-loop structures, and single-stranded RNA molecules. Has 3'-5' exoribonuclease activity on mismatched deoxyribonucleotides at the 3' termini of nicked or gapped DNA molecules during short-patch BER. Possesses DNA 3' phosphodiesterase activity capable of removing lesions (such as phosphoglycolate) blocking the 3' side of DNA strand breaks. May also play a role in the epigenetic regulation of gene expression by participating in DNA demethylation. Acts as a loading factor for POLB onto non-incised AP sites in DNA and stimulates the 5'-terminal deoxyribose 5'-phosphate (dRp) excision activity of POLB. Plays a role in the protection from granzyme-mediated cellular repair leading to cell death. Also involved in the DNA cleavage step of class switch recombination (CSR). On the other hand, APEX1 also exerts reversible nuclear redox activity to regulate DNA binding affinity and transcriptional activity of transcriptional factors by controlling the redox status of their DNA-binding domain, such as the FOS/JUN AP-1 complex after exposure to IR. Involved in calcium-dependent down-regulation of parathyroid hormone (PTH) expression by binding to negative calcium response elements (nCaREs). Together with HNRNPL or the dimer XRCC5/XRCC6, associates with nCaRE, acting as an activator of transcriptional repression. Stimulates the YBX1-mediated MDR1 promoter activity, when acetylated at Lys-6 and Lys-7, leading to drug resistance. Also acts as an endoribonuclease involved in the control of single-stranded RNA metabolism. Plays a role in regulating MYC mRNA turnover by preferentially cleaving in between UA and CA dinucleotides of the MYC coding region determinant (CRD). In association with NMD1, plays a role in the rRNA quality control process during cell cycle progression. Associates, together with YBX1, on the MDR1 promoter. Together with NPM1, associates with rRNA. Binds DNA and RNA. The sequence is that of DNA repair nuclease/redox regulator APEX1 (APEX1) from Bos taurus (Bovine).